A 314-amino-acid chain; its full sequence is Olfactory receptor 1E1 (314 aa).

Topologically, residues 1 to 25 (MMGQNQTSISDFLLLGLPIQPEQQN) are extracellular. N5 carries an N-linked (GlcNAc...) asparagine glycan. A helical membrane pass occupies residues 26 to 49 (LCYALFLAMYLTTLLGNLLIIVLI). Topologically, residues 50 to 57 (RLDSHLHT) are cytoplasmic. A helical membrane pass occupies residues 58–79 (PMYLFLSNLSFSDLCFSSVTIP). At 80 to 100 (KLLQNMQNQDPSIPYADCLTQ) the chain is on the extracellular side. The helical transmembrane segment at 101-120 (MYFFLLFGDLESFLLVAMAY) threads the bilayer. The Cytoplasmic segment spans residues 121-139 (DRYVAICFPLHYTAIMSPM). The helical transmembrane segment at 140 to 158 (LCLALVALSWVLTTFHAML) threads the bilayer. Over 159–195 (HTLLMARLCFCADNVIPHFFCDMSALLKLAFSDTRVN) the chain is Extracellular. A helical transmembrane segment spans residues 196 to 219 (EWVIFIMGGLILVIPFLLILGSYA). At 220–236 (RIVSSILKVPSSKGICK) the chain is on the cytoplasmic side. Residues 237 to 259 (AFSTCGSHLSVVSLFYGTVIGLY) traverse the membrane as a helical segment. Topologically, residues 260-272 (LCSSANSSTLKDT) are extracellular. The chain crosses the membrane as a helical span at residues 273-292 (VMAMMYTVVTPMLNPFIYSL). Residues 293-314 (RNRDMKGALSRVIHQKKTFFSL) lie on the Cytoplasmic side of the membrane.

This sequence belongs to the G-protein coupled receptor 1 family.

The protein localises to the cell membrane. Its function is as follows. Odorant receptor. The protein is Olfactory receptor 1E1 (OR1E1) of Homo sapiens (Human).